Reading from the N-terminus, the 185-residue chain is Large ribosomal subunit protein uL5 (185 aa).

Belongs to the universal ribosomal protein uL5 family. Part of the 50S ribosomal subunit; part of the 5S rRNA/L5/L18/L25 subcomplex. Contacts the 5S rRNA and the P site tRNA. Forms a bridge to the 30S subunit in the 70S ribosome.

This is one of the proteins that bind and probably mediate the attachment of the 5S RNA into the large ribosomal subunit, where it forms part of the central protuberance. In the 70S ribosome it contacts protein S13 of the 30S subunit (bridge B1b), connecting the 2 subunits; this bridge is implicated in subunit movement. Contacts the P site tRNA; the 5S rRNA and some of its associated proteins might help stabilize positioning of ribosome-bound tRNAs. In Sinorhizobium medicae (strain WSM419) (Ensifer medicae), this protein is Large ribosomal subunit protein uL5.